A 738-amino-acid chain; its full sequence is DNA topoisomerase 4 subunit A (738 aa).

The Topo IIA-type catalytic domain occupies 32-496 (LPDVRDGLKP…SFEEVDLTNQ (465 aa)). Tyr-120 acts as the O-(5'-phospho-DNA)-tyrosine intermediate in catalysis.

Belongs to the type II topoisomerase GyrA/ParC subunit family. ParC type 1 subfamily. In terms of assembly, heterotetramer composed of ParC and ParE.

It localises to the cell membrane. The catalysed reaction is ATP-dependent breakage, passage and rejoining of double-stranded DNA.. Functionally, topoisomerase IV is essential for chromosome segregation. It relaxes supercoiled DNA. Performs the decatenation events required during the replication of a circular DNA molecule. This chain is DNA topoisomerase 4 subunit A, found in Rickettsia prowazekii (strain Madrid E).